We begin with the raw amino-acid sequence, 282 residues long: Probable endonuclease 4 (282 aa).

Positions 69, 109, 145, 179, 182, 216, 229, 231, and 261 each coordinate Zn(2+).

This sequence belongs to the AP endonuclease 2 family. It depends on Zn(2+) as a cofactor.

It catalyses the reaction Endonucleolytic cleavage to 5'-phosphooligonucleotide end-products.. In terms of biological role, endonuclease IV plays a role in DNA repair. It cleaves phosphodiester bonds at apurinic or apyrimidinic (AP) sites, generating a 3'-hydroxyl group and a 5'-terminal sugar phosphate. The polypeptide is Probable endonuclease 4 (Magnetococcus marinus (strain ATCC BAA-1437 / JCM 17883 / MC-1)).